The chain runs to 295 residues: MTHLFEGVGVALTTPFTNNKVNLEALKAHVNFLLENNAQAIIVNGTTAESPTLTTDEKERILKTVIDLVDKRVPVIAGTGTNDTEKSIQASFQAKALGADAIMLITPYYNKTNQRGLVKHFEAITDAVKLPVVLYNVPSRTNMTIEPETVEILSQHPYIVALKDATNDFEYLEEVKKRIDTNSFALYSGNDDNVVEYYQRGGQGVISVIANVIPKEFQALYDAQQSGLDIQDQFKPIGTLLSALSVDINPIPIKALTSYLEFGNYELRLPLVSLEDTDTKVLREAYDTFKAGENE.

Threonine 47 is a binding site for pyruvate. The active-site Proton donor/acceptor is the tyrosine 135. The Schiff-base intermediate with substrate role is filled by lysine 163. Isoleucine 206 contributes to the pyruvate binding site.

This sequence belongs to the DapA family. In terms of assembly, homodimer.

The protein localises to the cytoplasm. It catalyses the reaction L-aspartate 4-semialdehyde + pyruvate = (2S,4S)-4-hydroxy-2,3,4,5-tetrahydrodipicolinate + H2O + H(+). It participates in amino-acid biosynthesis; L-lysine biosynthesis via DAP pathway; (S)-tetrahydrodipicolinate from L-aspartate: step 3/4. Functionally, catalyzes the condensation of (S)-aspartate-beta-semialdehyde [(S)-ASA] and pyruvate to 4-hydroxy-tetrahydrodipicolinate (HTPA). This Staphylococcus aureus (strain Mu50 / ATCC 700699) protein is 4-hydroxy-tetrahydrodipicolinate synthase.